The following is a 96-amino-acid chain: Large ribosomal subunit protein eL21 (96 aa).

The interval 1–66 (MPSSNGPLEG…FDGQTGTVEG (66 aa)) is disordered.

This sequence belongs to the eukaryotic ribosomal protein eL21 family. Part of the 50S ribosomal subunit. Interacts with protein L18 and binds the 5S rRNA. Has been cross-linked to L18.

This is one of 5 proteins that mediate the attachment of the 5S rRNA onto the large ribosomal subunit, stabilizing the orientation of adjacent RNA domains. The chain is Large ribosomal subunit protein eL21 (rpl21e) from Haloarcula marismortui (strain ATCC 43049 / DSM 3752 / JCM 8966 / VKM B-1809) (Halobacterium marismortui).